Consider the following 412-residue polypeptide: MTLRRRGEKATISIQEHMAIDVCPGPIRPIKQISDYFPRFPRGLPPTAAPRAPAPPDAPARSPAASASPRSPSDGARDDDEDVDQLFGAYGASPGPSPGPSPARPPAKPPEDEPDVDGYESDDCTALGTLDFSLLYDQENNALHCTISKAKGLKPMDHNGLADPYVKLHLLPGASKANKLRTKTLRNTLNPSWNETLTYYGITDEDMVRKTLRISVCDEDKFRHNEFIGETRVPLKKLKPNHTKTFSICLEKQLPVDKAEDKSLEERGRILISLKYSSQKQGLLVGIVRCAHLAAMDANGYSDPYVKTYLKPDVDKKSKHKTAVKKKTLNPEFNEEFCYEIKHGDLAKKTLEVTVWDYDIGKSNDFIGGVVLGINAKGERLKHWFDCLKNKDKRIERWHTLTNELPGAVLSD.

Residues 1–36 form a negatively regulates targeting to plasma membrane region; sequence MTLRRRGEKATISIQEHMAIDVCPGPIRPIKQISDY. Residues 1-90 are mediates interaction with DYNLT1; sequence MTLRRRGEKA…EDVDQLFGAY (90 aa). Residues 38-123 form a disordered region; that stretch reads PRFPRGLPPT…PDVDGYESDD (86 aa). Pro residues predominate over residues 43-58; it reads GLPPTAAPRAPAPPDA. Low complexity predominate over residues 59 to 74; that stretch reads PARSPAASASPRSPSD. The segment covering 95–108 has biased composition (pro residues); it reads GPSPGPSPARPPAK. Positions 112–123 are enriched in acidic residues; that stretch reads DEPDVDGYESDD. C2 domains are found at residues 126-250 and 266-399; these read ALGT…SICL and ERGR…ERWH. Positions 157, 163, 218, 220, 297, 303, 357, 359, and 365 each coordinate Ca(2+). Positions 257–375 are mediates interaction with STXBP3; it reads DKAEDKSLEE…FIGGVVLGIN (119 aa). The residue at position 411 (serine 411) is a Phosphoserine.

As to quaternary structure, interacts with cytoplasmic dynein light chain DYNLT1. May interact with UNC13A; the interaction mediates targeting to the plasma membrane. Probably interacts with the SNARE (soluble N-ethylmaleimide-sensitive factor attached protein receptor) complex composed of SNAP25, STX1A and VAMP2; the interaction is calcium-dependent and competitive with SYT1. Interacts with STX4; the interaction is calcium-dependent, increased by insulin and glucose, and mediates vesicle fusion with plasma membrane in pancreatic cells and adipocytes. Interacts with STXBP3; the interaction is direct, occurs at the cell membrane and regulates glucose-stimulated insulin secretion. It depends on Ca(2+) as a cofactor. As to expression, widely expressed. Expressed in pancreatic islet cells (at protein level).

The protein localises to the cytoplasm. It is found in the cytoplasmic granule. It localises to the cell membrane. Calcium sensor which positively regulates SNARE-dependent fusion of vesicles with membranes. Binds phospholipids in a calcium-dependent manner and may act at the priming stage of fusion by modifying membrane curvature to stimulate fusion. Involved in calcium-triggered exocytosis in chromaffin cells and calcium-dependent spontaneous release of neurotransmitter in absence of action potentials in neuronal cells. Involved both in glucose-stimulated insulin secretion in pancreatic cells and insulin-dependent GLUT4 transport to the plasma membrane in adipocytes. In Mus musculus (Mouse), this protein is Double C2-like domain-containing protein beta (Doc2b).